Here is a 376-residue protein sequence, read N- to C-terminus: Lateral eye opsin (376 aa).

The Extracellular segment spans residues Met1 to Trp46. Asn17 is a glycosylation site (N-linked (GlcNAc...) asparagine). A helical membrane pass occupies residues Tyr47–Leu71. At Met72–Asn83 the chain is on the cytoplasmic side. Residues Leu84–Cys108 traverse the membrane as a helical segment. Residues Phe109–Tyr123 lie on the Extracellular side of the membrane. Cys120 and Cys197 are disulfide-bonded. Residues Gly124–Leu143 traverse the membrane as a helical segment. The Cytoplasmic segment spans residues Asp144–Lys162. The helical transmembrane segment at Ala163–Ser186 threads the bilayer. The Extracellular segment spans residues Arg187 to Ser210. Asn193 carries an N-linked (GlcNAc...) asparagine glycan. Residues Tyr211–Val238 form a helical membrane-spanning segment. The Cytoplasmic portion of the chain corresponds to Ala239–Lys274. A helical transmembrane segment spans residues Val275 to Val298. Residues Phe299 to Thr306 lie on the Extracellular side of the membrane. A helical membrane pass occupies residues Pro307–Ser331. Lys318 carries the post-translational modification N6-(retinylidene)lysine. Topologically, residues His332–Ala376 are cytoplasmic. The interval Gly349 to Ala376 is disordered. A compositionally biased stretch (basic and acidic residues) spans Met367–Ala376.

It belongs to the G-protein coupled receptor 1 family. Opsin subfamily. Phosphorylated on some or all of the serine and threonine residues present in the C-terminal region. In terms of tissue distribution, lateral eye.

Its subcellular location is the membrane. In terms of biological role, visual pigments are the light-absorbing molecules that mediate vision. They consist of an apoprotein, opsin, covalently linked to cis-retinal. This chain is Lateral eye opsin, found in Limulus polyphemus (Atlantic horseshoe crab).